The chain runs to 166 residues: Large ribosomal subunit protein uL10 (166 aa).

It belongs to the universal ribosomal protein uL10 family. Part of the ribosomal stalk of the 50S ribosomal subunit. The N-terminus interacts with L11 and the large rRNA to form the base of the stalk. The C-terminus forms an elongated spine to which L12 dimers bind in a sequential fashion forming a multimeric L10(L12)X complex.

In terms of biological role, forms part of the ribosomal stalk, playing a central role in the interaction of the ribosome with GTP-bound translation factors. In Lysinibacillus sphaericus (strain C3-41), this protein is Large ribosomal subunit protein uL10.